The chain runs to 148 residues: Large ribosomal subunit protein bL9 (148 aa).

Belongs to the bacterial ribosomal protein bL9 family.

In terms of biological role, binds to the 23S rRNA. This is Large ribosomal subunit protein bL9 from Acidithiobacillus ferrooxidans (strain ATCC 23270 / DSM 14882 / CIP 104768 / NCIMB 8455) (Ferrobacillus ferrooxidans (strain ATCC 23270)).